A 160-amino-acid chain; its full sequence is Transcription elongation factor GreA (160 aa).

The stretch at 1–72 (MAEKTYPMTL…QISSLETKIR (72 aa)) forms a coiled coil.

This sequence belongs to the GreA/GreB family.

In terms of biological role, necessary for efficient RNA polymerase transcription elongation past template-encoded arresting sites. The arresting sites in DNA have the property of trapping a certain fraction of elongating RNA polymerases that pass through, resulting in locked ternary complexes. Cleavage of the nascent transcript by cleavage factors such as GreA or GreB allows the resumption of elongation from the new 3'terminus. GreA releases sequences of 2 to 3 nucleotides. This chain is Transcription elongation factor GreA, found in Streptococcus pneumoniae (strain Hungary19A-6).